The chain runs to 182 residues: uncharacterized protein (182 aa).

2 disordered regions span residues methionine 1–leucine 73 and serine 105–arginine 182. Low complexity-rich tracts occupy residues arginine 43–serine 68 and serine 105–threonine 121. The span at alanine 122–serine 131 shows a compositional bias: pro residues.

This is an uncharacterized protein from Caenorhabditis elegans.